Here is a 58-residue protein sequence, read N- to C-terminus: MLGWALTFLIIAILAGVMGFGGIAGTAAGIAKIIFFVFLVLLVLSLVANAIRGKGPKV.

2 helical membrane passes run 4 to 24 (WALT…GGIA) and 27 to 47 (AAGI…LSLV).

The protein belongs to the UPF0391 family.

The protein resides in the cell membrane. This is UPF0391 membrane protein Patl_4137 from Pseudoalteromonas atlantica (strain T6c / ATCC BAA-1087).